The sequence spans 554 residues: Suppressor of hairless homolog (554 aa).

A disordered region spans residues 1–31 (MYHPHHLPAHGQVQSHQHREDAAATSSRDVN). 3 consecutive DNA-binding regions follow at residues 83–90 (KSYGNEKR), 218–227 (RLRSQTVSTR), and 291–323 (RKVDKQTAILDADDPVSQLHKCAFYLKDTERMY). Residues 381 to 471 (PNVHSLQLNG…YPTNLTFTFT (91 aa)) form the IPT/TIG domain. The interval 489–554 (GSKRPSASMP…NGANMLRTAS (66 aa)) is disordered. The segment covering 508-519 (DSGRGNESDRGD) has biased composition (basic and acidic residues).

The protein belongs to the Su(H) family. Interacts with activated Notch proteins.

It localises to the nucleus. In terms of biological role, transcriptional regulator that plays a central role in Notch signaling, a signaling pathway involved in cell-cell communication that regulates a broad spectrum of cell-fate determinations. Acts as a transcriptional repressor when it is not associated with Notch proteins. When associated with some Notch protein, it acts as a transcriptional activator that activates transcription of Notch target genes. Required for the transcriptional expression of Brachyury, suggesting that it participates in notochord differentiation. This is Suppressor of hairless homolog (Su(H)) from Ciona intestinalis (Transparent sea squirt).